Consider the following 861-residue polypeptide: Translation initiation factor IF-2 (861 aa).

The tract at residues 107-272 (AQKQQDIQRA…QRKKKSKVVQ (166 aa)) is disordered. A compositionally biased stretch (basic and acidic residues) spans 115-128 (RAAEEAAAKERETE). Polar residues-rich tracts occupy residues 148-158 (SVQQEAANMDT) and 169-180 (VDESVSATTAGG). The segment covering 210 to 228 (NKEDSEVRREPADAEDLKR) has biased composition (basic and acidic residues). The segment covering 260-269 (RARQRKKKSK) has biased composition (basic residues). The region spanning 362–531 (SRAPVVSVMG…LLQSEMLELT (170 aa)) is the tr-type G domain. Positions 371–378 (GHVDHGKT) are G1. Residue 371 to 378 (GHVDHGKT) participates in GTP binding. The G2 stretch occupies residues 396 to 400 (GITQH). A G3 region spans residues 417-420 (DTPG). GTP-binding positions include 417-421 (DTPGH) and 471-474 (NKMD). Residues 471–474 (NKMD) are G4. The segment at 507-509 (SAH) is G5.

Belongs to the TRAFAC class translation factor GTPase superfamily. Classic translation factor GTPase family. IF-2 subfamily.

The protein localises to the cytoplasm. One of the essential components for the initiation of protein synthesis. Protects formylmethionyl-tRNA from spontaneous hydrolysis and promotes its binding to the 30S ribosomal subunits. Also involved in the hydrolysis of GTP during the formation of the 70S ribosomal complex. This Hahella chejuensis (strain KCTC 2396) protein is Translation initiation factor IF-2.